The chain runs to 436 residues: KICSTOR complex protein kaptin (436 aa).

Position 1 is an N-acetylmethionine (Met1).

As to quaternary structure, part of the KICSTOR complex composed of KPTN, ITFG2, KICS2 and SZT2. SZT2 probably serves as a link between the other three proteins in the KICSTOR complex and mediates the direct interaction with the GATOR1 complex. May associate with F-actin filaments.

It is found in the lysosome membrane. The protein localises to the cell projection. The protein resides in the lamellipodium. It localises to the stereocilium. As part of the KICSTOR complex functions in the amino acid-sensing branch of the TORC1 signaling pathway. Recruits, in an amino acid-independent manner, the GATOR1 complex to the lysosomal membranes and allows its interaction with GATOR2 and the RAG GTPases. Functions upstream of the RAG GTPases and is required to negatively regulate mTORC1 signaling in absence of amino acids. In absence of the KICSTOR complex mTORC1 is constitutively localized to the lysosome and activated. The KICSTOR complex is also probably involved in the regulation of mTORC1 by glucose. In Homo sapiens (Human), this protein is KICSTOR complex protein kaptin.